The primary structure comprises 506 residues: UDP-N-acetylmuramoyl-L-alanyl-D-glutamate--2,6-diaminopimelate ligase (506 aa).

S42 provides a ligand contact to UDP-N-acetyl-alpha-D-muramoyl-L-alanyl-D-glutamate. 125 to 131 (GTSGKTT) lines the ATP pocket. UDP-N-acetyl-alpha-D-muramoyl-L-alanyl-D-glutamate-binding positions include 166-167 (TT), S193, and R201. The residue at position 233 (K233) is an N6-carboxylysine. Meso-2,6-diaminopimelate is bound by residues R395, 419–422 (DNPR), G475, and E479. The Meso-diaminopimelate recognition motif signature appears at 419–422 (DNPR).

The protein belongs to the MurCDEF family. MurE subfamily. The cofactor is Mg(2+). Carboxylation is probably crucial for Mg(2+) binding and, consequently, for the gamma-phosphate positioning of ATP.

The protein resides in the cytoplasm. It catalyses the reaction UDP-N-acetyl-alpha-D-muramoyl-L-alanyl-D-glutamate + meso-2,6-diaminopimelate + ATP = UDP-N-acetyl-alpha-D-muramoyl-L-alanyl-gamma-D-glutamyl-meso-2,6-diaminopimelate + ADP + phosphate + H(+). It functions in the pathway cell wall biogenesis; peptidoglycan biosynthesis. Its function is as follows. Catalyzes the addition of meso-diaminopimelic acid to the nucleotide precursor UDP-N-acetylmuramoyl-L-alanyl-D-glutamate (UMAG) in the biosynthesis of bacterial cell-wall peptidoglycan. The polypeptide is UDP-N-acetylmuramoyl-L-alanyl-D-glutamate--2,6-diaminopimelate ligase (Streptomyces coelicolor (strain ATCC BAA-471 / A3(2) / M145)).